A 451-amino-acid chain; its full sequence is MNLEVKKIDTANARLSAKPSVEDLEKRYDKIAQKIAQKVKIDGFRRGKVPLSLVKTRYQAQIDQDAQEEMIQEVLKNAFKELGIENKDLIGSPNLTKFEKKDAHFEIEADIGLKPTIVLDKIKECVPSVGVEIPNEEKINERLKQLAKDYAKFVDTDAQRKAQNDDKLTIDFEGFIDNAPFEGGKAENFTLILGNKQMLEDFEKALLGMQASEEKEFPLTFPSGYHAEHLAGKEALFKVKLHQIQAREALEINDELAKIVLANEENATLKLLKERVKGQLFLENKARLYNEELKEKLIENLDEKILFDLPKTIIEQEMDLLFRNALYSMQAEEVKSLQESQEKAKEKRESFRNDATKSVKITFIIDALAKEEKIGVHDNEVFQTLYYEAMMTGQNPESLIEQYRKNNMLAAVKMAMIEDRVLAYLLDKNLPKEQQEILEKMRPNAQKTQAG.

In terms of domain architecture, PPIase FKBP-type spans 165–250 (DDKLTIDFEG…LHQIQAREAL (86 aa)).

This sequence belongs to the FKBP-type PPIase family. Tig subfamily.

It is found in the cytoplasm. The enzyme catalyses [protein]-peptidylproline (omega=180) = [protein]-peptidylproline (omega=0). In terms of biological role, involved in protein export. Acts as a chaperone by maintaining the newly synthesized protein in an open conformation. Functions as a peptidyl-prolyl cis-trans isomerase. This Helicobacter pylori (strain G27) protein is Trigger factor.